The chain runs to 104 residues: Cysteine-rich and transmembrane domain-containing protein 1 (104 aa).

2 stretches are compositionally biased toward pro residues: residues 1–25 (MNPE…PQQP) and 33–47 (GAPP…PPQG). Residues 1-47 (MNPENPPPYPGPGPTAPYPPYPQQPMGPMGPMGAPPPQGYPYPPPQG) are disordered. A helical membrane pass occupies residues 81–98 (LGPSTCLTACWTALCCCC).

This sequence belongs to the CYSTM1 family.

Its subcellular location is the membrane. The sequence is that of Cysteine-rich and transmembrane domain-containing protein 1 (Cystm1) from Mus musculus (Mouse).